A 188-amino-acid chain; its full sequence is Apolipoprotein M (188 aa).

Residues 1 to 22 constitute a signal peptide (not cleaved); sequence MFHQIWAALLYFYGIILNSIYQ. Intrachain disulfides connect Cys-23–Cys-167, Cys-95–Cys-183, and Cys-128–Cys-157. An N-linked (GlcNAc...) asparagine glycan is attached at Asn-135. Residues Glu-136 and Arg-143 each coordinate tetradecanoate.

The protein belongs to the calycin superfamily. Lipocalin family. Highly divergent. Interacts with LRP2; LRP2 mediates APOM renal uptake and subsequent lysosomal degradation. Plasma protein. Expressed in liver and kidney.

The protein resides in the secreted. Functionally, probably involved in lipid transport. Can bind sphingosine-1-phosphate, myristic acid, palmitic acid and stearic acid, retinol, all-trans-retinoic acid and 9-cis-retinoic acid. This is Apolipoprotein M (APOM) from Homo sapiens (Human).